The sequence spans 505 residues: Lysine--tRNA ligase (505 aa).

E415 and E422 together coordinate Mg(2+).

Belongs to the class-II aminoacyl-tRNA synthetase family. As to quaternary structure, homodimer. Mg(2+) serves as cofactor.

Its subcellular location is the cytoplasm. It carries out the reaction tRNA(Lys) + L-lysine + ATP = L-lysyl-tRNA(Lys) + AMP + diphosphate. The polypeptide is Lysine--tRNA ligase (Citrobacter koseri (strain ATCC BAA-895 / CDC 4225-83 / SGSC4696)).